The primary structure comprises 201 residues: Probable molybdenum cofactor guanylyltransferase (201 aa).

Residues 16–18 (LAG), lysine 28, aspartate 75, and aspartate 107 contribute to the GTP site. Position 107 (aspartate 107) interacts with Mg(2+).

It belongs to the MobA family. Requires Mg(2+) as cofactor.

The protein resides in the cytoplasm. It carries out the reaction Mo-molybdopterin + GTP + H(+) = Mo-molybdopterin guanine dinucleotide + diphosphate. Its function is as follows. Transfers a GMP moiety from GTP to Mo-molybdopterin (Mo-MPT) cofactor (Moco or molybdenum cofactor) to form Mo-molybdopterin guanine dinucleotide (Mo-MGD) cofactor. This chain is Probable molybdenum cofactor guanylyltransferase, found in Mycobacterium marinum (strain ATCC BAA-535 / M).